The following is a 227-amino-acid chain: MIDAFFIAGTDTDVGKTVASKAILDALNMKGLRTAAYKPIAAGSEDKGDGVQNSDAIHLRSVANVELSYDEVNPYALLLPTSPHIAAAAENIVIDYSVLSKGLASLKAKSDIVLVEGAGGWRVPVSKSDCLSTWVQQEKLPVVLVVGIKLGCLSHAMLTEEAIKHDGLDIVGWVANRVNPGTEHYADIIEMLEDKMPAPKLGEIPYMPSIKRKSMGKYINLDSLMEI.

13–18 (DVGKTV) contributes to the ATP binding site. Residue T17 coordinates Mg(2+). The active site involves K38. Residues D55, 116 to 119 (EGAG), and 176 to 177 (NR) each bind ATP. Mg(2+)-binding residues include D55 and E116.

The protein belongs to the dethiobiotin synthetase family. In terms of assembly, homodimer. It depends on Mg(2+) as a cofactor.

The protein localises to the cytoplasm. It catalyses the reaction (7R,8S)-7,8-diammoniononanoate + CO2 + ATP = (4R,5S)-dethiobiotin + ADP + phosphate + 3 H(+). It participates in cofactor biosynthesis; biotin biosynthesis; biotin from 7,8-diaminononanoate: step 1/2. Functionally, catalyzes a mechanistically unusual reaction, the ATP-dependent insertion of CO2 between the N7 and N8 nitrogen atoms of 7,8-diaminopelargonic acid (DAPA, also called 7,8-diammoniononanoate) to form a ureido ring. In Aliivibrio salmonicida (strain LFI1238) (Vibrio salmonicida (strain LFI1238)), this protein is ATP-dependent dethiobiotin synthetase BioD.